A 227-amino-acid chain; its full sequence is Deoxyribose-phosphate aldolase (227 aa).

Asp-96 functions as the Proton donor/acceptor in the catalytic mechanism. Lys-158 (schiff-base intermediate with acetaldehyde) is an active-site residue. Lys-187 (proton donor/acceptor) is an active-site residue.

This sequence belongs to the DeoC/FbaB aldolase family. DeoC type 1 subfamily.

It is found in the cytoplasm. The enzyme catalyses 2-deoxy-D-ribose 5-phosphate = D-glyceraldehyde 3-phosphate + acetaldehyde. Its pathway is carbohydrate degradation; 2-deoxy-D-ribose 1-phosphate degradation; D-glyceraldehyde 3-phosphate and acetaldehyde from 2-deoxy-alpha-D-ribose 1-phosphate: step 2/2. Functionally, catalyzes a reversible aldol reaction between acetaldehyde and D-glyceraldehyde 3-phosphate to generate 2-deoxy-D-ribose 5-phosphate. The sequence is that of Deoxyribose-phosphate aldolase from Desulfotalea psychrophila (strain LSv54 / DSM 12343).